An 87-amino-acid chain; its full sequence is Conotoxin Bt15a (87 aa).

The first 23 residues, 1–23, serve as a signal peptide directing secretion; sequence MEKLTILVLVATVLLAIQVLVQS. The propeptide occupies 24 to 49; it reads DGEKPLKRRVKQYAAKRLSALMRGPR. A Pyrrolidone carboxylic acid modification is found at Gln-50.

This sequence belongs to the conotoxin O2 superfamily. In terms of processing, contains 4 disulfide bonds. Expressed by the venom duct.

Its subcellular location is the secreted. The chain is Conotoxin Bt15a from Conus betulinus (Beech cone).